We begin with the raw amino-acid sequence, 733 residues long: SWR1-complex protein 4 (733 aa).

Disordered stretches follow at residues 1-34 (MTSH…RPNL) and 98-128 (PDGT…DSSF). Positions 146–217 (NTNLKHPDWT…DLKARYYEVA (72 aa)) constitute an SANT domain. Positions 247–299 (KQEQNRKRFAENTLKRSSDEAREEEALLLEIKRIMARTERFNEERRELYNRLD) form a coiled coil. A compositionally biased stretch (low complexity) spans 371–384 (AASRRESLAASSTA). 2 disordered regions span residues 371–488 (AASR…GSGP) and 564–733 (KKAE…KQKK). 4 stretches are compositionally biased toward basic and acidic residues: residues 387-423 (NDHH…DRHG), 463-484 (PERR…HDRL), 564-589 (KKAE…KGGE), and 610-653 (DDAK…KGEE). A compositionally biased stretch (low complexity) spans 699 to 710 (GSSSGAGASSGA).

The protein belongs to the SWC4 family. In terms of assembly, component of the SWR1 chromatin-remodeling complex and of the NuA4 histone acetyltransferase complex.

Its subcellular location is the nucleus. Its function is as follows. Component of the SWR1 complex which mediates the ATP-dependent exchange of histone H2A for the H2A variant H2A.Z leading to transcriptional regulation of selected genes by chromatin remodeling. Component of the NuA4 histone acetyltransferase complex which is involved in transcriptional activation of selected genes principally by acetylation of nucleosomal histone H4 and H2A. The NuA4 complex is also involved in DNA repair. This is SWR1-complex protein 4 (crc-1) from Neurospora crassa (strain ATCC 24698 / 74-OR23-1A / CBS 708.71 / DSM 1257 / FGSC 987).